The sequence spans 287 residues: Phosphatidylserine decarboxylase proenzyme (287 aa).

Active-site charge relay system; for autoendoproteolytic cleavage activity residues include aspartate 86, histidine 143, and serine 250. Serine 250 functions as the Schiff-base intermediate with substrate; via pyruvic acid; for decarboxylase activity in the catalytic mechanism. A Pyruvic acid (Ser); by autocatalysis modification is found at serine 250.

The protein belongs to the phosphatidylserine decarboxylase family. PSD-B subfamily. Prokaryotic type I sub-subfamily. Heterodimer of a large membrane-associated beta subunit and a small pyruvoyl-containing alpha subunit. It depends on pyruvate as a cofactor. Is synthesized initially as an inactive proenzyme. Formation of the active enzyme involves a self-maturation process in which the active site pyruvoyl group is generated from an internal serine residue via an autocatalytic post-translational modification. Two non-identical subunits are generated from the proenzyme in this reaction, and the pyruvate is formed at the N-terminus of the alpha chain, which is derived from the carboxyl end of the proenzyme. The autoendoproteolytic cleavage occurs by a canonical serine protease mechanism, in which the side chain hydroxyl group of the serine supplies its oxygen atom to form the C-terminus of the beta chain, while the remainder of the serine residue undergoes an oxidative deamination to produce ammonia and the pyruvoyl prosthetic group on the alpha chain. During this reaction, the Ser that is part of the protease active site of the proenzyme becomes the pyruvoyl prosthetic group, which constitutes an essential element of the active site of the mature decarboxylase.

It is found in the cell membrane. The enzyme catalyses a 1,2-diacyl-sn-glycero-3-phospho-L-serine + H(+) = a 1,2-diacyl-sn-glycero-3-phosphoethanolamine + CO2. The protein operates within phospholipid metabolism; phosphatidylethanolamine biosynthesis; phosphatidylethanolamine from CDP-diacylglycerol: step 2/2. In terms of biological role, catalyzes the formation of phosphatidylethanolamine (PtdEtn) from phosphatidylserine (PtdSer). This Wigglesworthia glossinidia brevipalpis protein is Phosphatidylserine decarboxylase proenzyme.